Consider the following 471-residue polypeptide: FAD-linked oxidoreductase sorD (471 aa).

An N-terminal signal peptide occupies residues 1–23 (MQAASAFATCLLASVGGNSSAVA). N-linked (GlcNAc...) asparagine glycans are attached at residues N18, N29, N174, N279, and N351. The region spanning 41–212 (LLTTPSAIVW…TDFSIRTEPV (172 aa)) is the FAD-binding PCMH-type domain.

Belongs to the oxygen-dependent FAD-linked oxidoreductase family. It depends on FAD as a cofactor.

The protein operates within secondary metabolite biosynthesis. Its function is as follows. FAD-linked oxidoreductase; part of the gene cluster that mediates the biosynthesis of sorbicillinoids, a diverse group of yellow secondary metabolites that restrict growth of competing pathogenic fungi but not of bacteria. Sorbicillinoids biosynthesis requires the action of two PKSs. SorA iteratively combines three acetyl units and the growing chain is modified by the ketoacyl reductase subunit, and optional by the enoyl reductase subunit in the second cycle. The polyketide is then handed over to the PKS SorB, which adds three more acetyl units, and two methyl groups. SorB releases an aldehyde, which undergoes spontaneous cyclization resulting in the formation of sorbicillin or 2',3'-dihydrosorbicillin. The monooxygenase sorC oxidizes sorbicillin and 2',3'-dihydrosorbicillin to 2',3'-dihydrosorbicillinol and sorbicillinol, respectively. The oxidoreductase sorD further converts sorbicillinol into oxosorbicillinol. Sorbicillinol is the building block for the other sorbicillinoids such as disorbicillinol, bisvertinolon, and dihydrobisvertinolone. The polypeptide is FAD-linked oxidoreductase sorD (Penicillium rubens (strain ATCC 28089 / DSM 1075 / NRRL 1951 / Wisconsin 54-1255) (Penicillium chrysogenum)).